Here is a 395-residue protein sequence, read N- to C-terminus: Phosphopentomutase (395 aa).

Mn(2+)-binding residues include D16, D289, H294, D330, H331, and H342.

The protein belongs to the phosphopentomutase family. It depends on Mn(2+) as a cofactor.

It is found in the cytoplasm. It carries out the reaction 2-deoxy-alpha-D-ribose 1-phosphate = 2-deoxy-D-ribose 5-phosphate. The catalysed reaction is alpha-D-ribose 1-phosphate = D-ribose 5-phosphate. The protein operates within carbohydrate degradation; 2-deoxy-D-ribose 1-phosphate degradation; D-glyceraldehyde 3-phosphate and acetaldehyde from 2-deoxy-alpha-D-ribose 1-phosphate: step 1/2. Its function is as follows. Isomerase that catalyzes the conversion of deoxy-ribose 1-phosphate (dRib-1-P) and ribose 1-phosphate (Rib-1-P) to deoxy-ribose 5-phosphate (dRib-5-P) and ribose 5-phosphate (Rib-5-P), respectively. The sequence is that of Phosphopentomutase from Geobacillus kaustophilus (strain HTA426).